A 552-amino-acid chain; its full sequence is Probable protein kinase UbiB (552 aa).

The Protein kinase domain occupies 121–504 (HFDTVPLASA…QGLQRRVVNA (384 aa)). ATP-binding positions include 127–135 (LASASISQV) and Lys149. Asp284 (proton acceptor) is an active-site residue. Transmembrane regions (helical) follow at residues 501-521 (VVNA…YGLH) and 530-550 (IPVW…SAWW).

This sequence belongs to the ABC1 family. UbiB subfamily.

The protein resides in the cell inner membrane. It functions in the pathway cofactor biosynthesis; ubiquinone biosynthesis [regulation]. Is probably a protein kinase regulator of UbiI activity which is involved in aerobic coenzyme Q (ubiquinone) biosynthesis. This Xylella fastidiosa (strain M23) protein is Probable protein kinase UbiB.